Here is a 594-residue protein sequence, read N- to C-terminus: UvrABC system protein C (594 aa).

One can recognise a GIY-YIG domain in the interval 15 to 92 (DKPGCYQMKN…IQKFQPYYNI (78 aa)). The region spanning 197–232 (AKIKQSLQTKMQKASEAMEFERAADIRDQIHYIEVT) is the UVR domain.

This sequence belongs to the UvrC family. In terms of assembly, interacts with UvrB in an incision complex.

The protein resides in the cytoplasm. The UvrABC repair system catalyzes the recognition and processing of DNA lesions. UvrC both incises the 5' and 3' sides of the lesion. The N-terminal half is responsible for the 3' incision and the C-terminal half is responsible for the 5' incision. The sequence is that of UvrABC system protein C from Pediococcus pentosaceus (strain ATCC 25745 / CCUG 21536 / LMG 10740 / 183-1w).